The primary structure comprises 485 residues: NADH-quinone oxidoreductase subunit N (485 aa).

14 helical membrane passes run 8–28 (LIALLPLLIVGLTVVVVMLSI), 35–55 (FLNATLSVIGLNAALVSLWFV), 71–91 (GFAMLYTGLVLLASLATCTFA), 105–125 (FYLLVLIASLGGILLANANHL), 127–147 (TLFLGIELISLPLFGLIGYAF), 159–179 (YTILSAAASSFLLFGMALVYA), 203–223 (LLAGFGLMIVGPGFKLSLVPF), 235–255 (PAPVSTFLATASKIAIFGVVM), 271–291 (VVLGIIAFASIIFGNLMALSQ), 297–317 (LLGYSSISHLGYLLVALIALQ), 326–346 (VGVYLAGYLFSSLGAFGVVSL), 373–393 (AAVMTVMMLSLAGIPMTLGFI), 408–430 (WWLVAAVVVGSAIGLYYYLRVAV), and 455–475 (IVVLISALLVLVLGVWPQPLI).

It belongs to the complex I subunit 2 family. In terms of assembly, NDH-1 is composed of 13 different subunits. Subunits NuoA, H, J, K, L, M, N constitute the membrane sector of the complex.

The protein resides in the cell inner membrane. It catalyses the reaction a quinone + NADH + 5 H(+)(in) = a quinol + NAD(+) + 4 H(+)(out). Functionally, NDH-1 shuttles electrons from NADH, via FMN and iron-sulfur (Fe-S) centers, to quinones in the respiratory chain. The immediate electron acceptor for the enzyme in this species is believed to be ubiquinone. Couples the redox reaction to proton translocation (for every two electrons transferred, four hydrogen ions are translocated across the cytoplasmic membrane), and thus conserves the redox energy in a proton gradient. This Salmonella paratyphi A (strain ATCC 9150 / SARB42) protein is NADH-quinone oxidoreductase subunit N.